A 90-amino-acid chain; its full sequence is Small ribosomal subunit protein uS15c (90 aa).

The protein belongs to the universal ribosomal protein uS15 family. As to quaternary structure, part of the 30S ribosomal subunit.

It is found in the plastid. Its subcellular location is the chloroplast. The chain is Small ribosomal subunit protein uS15c (rps15) from Phaseolus vulgaris (Kidney bean).